Consider the following 131-residue polypeptide: Norrin (131 aa).

The N-terminal stretch at 1-24 (MRNHVLAASISMLSLLAIMGDTDS) is a signal peptide. Disulfide bonds link Cys-37–Cys-94, Cys-53–Cys-108, Cys-63–Cys-124, and Cys-67–Cys-126. In terms of domain architecture, CTCK spans 37-130 (CMRHHYVDSI…ILSCHCEECS (94 aa)).

As to quaternary structure, homodimer; disulfide-linked. Component of a complex, at least composed of TSPAN12, FZD4, LRP5/6 and norrin (NDP). Binds FZD4 with high affinity. Interacts with LRP6 (via Beta-propellers 1 and 2). Expressed in the outer nuclear, inner nuclear and ganglion cell layers of the retina.

The protein resides in the secreted. In terms of biological role, activates the canonical Wnt signaling pathway through FZD4 and LRP5 coreceptor. Plays a central role in retinal vascularization by acting as a ligand for FZD4 that signals via stabilizing beta-catenin (CTNNB1) and activating LEF/TCF-mediated transcriptional programs. Acts in concert with TSPAN12 to activate FZD4 independently of the Wnt-dependent activation of FZD4, suggesting the existence of a Wnt-independent signaling that also promote accumulation the beta-catenin (CTNNB1). May be involved in a pathway that regulates neural cell differentiation and proliferation. Possible role in neuroectodermal cell-cell interaction. The polypeptide is Norrin (Ndp) (Mus musculus (Mouse)).